We begin with the raw amino-acid sequence, 117 residues long: Cell cycle protein GpsB (117 aa).

Positions 32–70 (LDNVIKDYDAFVKENQRLQDENERLLAKVDELTRQVQVG) form a coiled coil.

This sequence belongs to the GpsB family. In terms of assembly, forms polymers through the coiled coil domains. Interacts with PBP1, MreC and EzrA.

It is found in the cytoplasm. Its function is as follows. Divisome component that associates with the complex late in its assembly, after the Z-ring is formed, and is dependent on DivIC and PBP2B for its recruitment to the divisome. Together with EzrA, is a key component of the system that regulates PBP1 localization during cell cycle progression. Its main role could be the removal of PBP1 from the cell pole after pole maturation is completed. Also contributes to the recruitment of PBP1 to the division complex. Not essential for septum formation. This is Cell cycle protein GpsB from Levilactobacillus brevis (strain ATCC 367 / BCRC 12310 / CIP 105137 / JCM 1170 / LMG 11437 / NCIMB 947 / NCTC 947) (Lactobacillus brevis).